The primary structure comprises 525 residues: GMP synthase [glutamine-hydrolyzing] (525 aa).

Residues 9–207 (RILILDFGSQ…VLDICGCAAL (199 aa)) form the Glutamine amidotransferase type-1 domain. Cys-86 serves as the catalytic Nucleophile. Catalysis depends on residues His-181 and Glu-183. Residues 208-400 (WTPSNIVDDA…LGLPYDMVYR (193 aa)) enclose the GMPS ATP-PPase domain. Residue 235 to 241 (SGGVDSS) coordinates ATP.

As to quaternary structure, homodimer.

The catalysed reaction is XMP + L-glutamine + ATP + H2O = GMP + L-glutamate + AMP + diphosphate + 2 H(+). It functions in the pathway purine metabolism; GMP biosynthesis; GMP from XMP (L-Gln route): step 1/1. Functionally, catalyzes the synthesis of GMP from XMP. The protein is GMP synthase [glutamine-hydrolyzing] of Pseudomonas aeruginosa (strain LESB58).